An 88-amino-acid chain; its full sequence is Small ribosomal subunit protein uS17 (88 aa).

Belongs to the universal ribosomal protein uS17 family. In terms of assembly, part of the 30S ribosomal subunit.

Functionally, one of the primary rRNA binding proteins, it binds specifically to the 5'-end of 16S ribosomal RNA. The polypeptide is Small ribosomal subunit protein uS17 (Synechococcus sp. (strain WH7803)).